A 179-amino-acid chain; its full sequence is Large ribosomal subunit protein uL5 (179 aa).

Belongs to the universal ribosomal protein uL5 family. Part of the 50S ribosomal subunit; part of the 5S rRNA/L5/L18/L25 subcomplex. Contacts the 5S rRNA and the P site tRNA. Forms a bridge to the 30S subunit in the 70S ribosome.

Its function is as follows. This is one of the proteins that bind and probably mediate the attachment of the 5S RNA into the large ribosomal subunit, where it forms part of the central protuberance. In the 70S ribosome it contacts protein S13 of the 30S subunit (bridge B1b), connecting the 2 subunits; this bridge is implicated in subunit movement. Contacts the P site tRNA; the 5S rRNA and some of its associated proteins might help stabilize positioning of ribosome-bound tRNAs. The polypeptide is Large ribosomal subunit protein uL5 (Halothermothrix orenii (strain H 168 / OCM 544 / DSM 9562)).